The chain runs to 105 residues: Met repressor (105 aa).

The protein belongs to the MetJ family. In terms of assembly, homodimer.

The protein localises to the cytoplasm. In terms of biological role, this regulatory protein, when combined with SAM (S-adenosylmethionine) represses the expression of the methionine regulon and of enzymes involved in SAM synthesis. The protein is Met repressor of Klebsiella pneumoniae subsp. pneumoniae (strain ATCC 700721 / MGH 78578).